The chain runs to 207 residues: Outer-membrane lipoprotein LolB (207 aa).

The signal sequence occupies residues 1–21 (MTLPDFRLIRLLPLASLVLTA). Cysteine 22 carries N-palmitoyl cysteine lipidation. Cysteine 22 carries the S-diacylglycerol cysteine lipid modification.

This sequence belongs to the LolB family. Monomer.

It localises to the cell outer membrane. Functionally, plays a critical role in the incorporation of lipoproteins in the outer membrane after they are released by the LolA protein. This Salmonella typhi protein is Outer-membrane lipoprotein LolB.